The primary structure comprises 562 residues: Probable E3 ubiquitin-protein ligase ARI7 (562 aa).

The segment at 1 to 39 (MDSEEDMLDAHDMESGEDDFYSGGTDDCNDSDDGEPDYG) is disordered. The segment covering 27-39 (DCNDSDDGEPDYG) has biased composition (acidic residues). Residues 133–346 (SELTCGICFD…GGFYACNRYE (214 aa)) are TRIAD supradomain. Zn(2+) is bound by residues Cys-137, Cys-140, Cys-154, His-156, Cys-159, Cys-162, Cys-182, Cys-187, Cys-226, Cys-231, Cys-248, Cys-250, Cys-255, Cys-258, His-263, Cys-268, Cys-295, and Cys-298. The RING-type 1 zinc-finger motif lies at 137–187 (CGICFDSYPPEKIASVSCGHPFCTTCWTGYISTTINDGPGCLMLRCPDPSC). Residues 206 to 268 (EKYNRYFLRS…TEEAHRPVDC (63 aa)) form an IBR-type zinc finger. The RING-type 2; atypical zinc-finger motif lies at 295–325 (CPRCKRPIEKNQGCMHMTCTPPCKYEFCWLC). Cys-308 is an active-site residue. Positions 313, 317, 322, 325, 332, and 342 each coordinate Zn(2+). Positions 524–562 (ACSSKSTSSKSTGCSSKTRGKGKGSSRTGGSSRNPDDNL) are disordered. The segment covering 525–540 (CSSKSTSSKSTGCSSK) has biased composition (low complexity).

The protein belongs to the RBR family. Ariadne subfamily. Zn(2+) serves as cofactor. As to expression, ubiquitous.

The catalysed reaction is [E2 ubiquitin-conjugating enzyme]-S-ubiquitinyl-L-cysteine + [acceptor protein]-L-lysine = [E2 ubiquitin-conjugating enzyme]-L-cysteine + [acceptor protein]-N(6)-ubiquitinyl-L-lysine.. It participates in protein modification; protein ubiquitination. Its function is as follows. Might act as an E3 ubiquitin-protein ligase, or as part of E3 complex, which accepts ubiquitin from specific E2 ubiquitin-conjugating enzymes and then transfers it to substrates. In Arabidopsis thaliana (Mouse-ear cress), this protein is Probable E3 ubiquitin-protein ligase ARI7 (ARI7).